A 450-amino-acid polypeptide reads, in one-letter code: Serine/threonine-protein kinase-transforming protein Rmil (450 aa).

Basic and acidic residues-rich tracts occupy residues 1–14 (MEAV…DQGV) and 49–73 (QRER…RDSS). Residues 1–80 (MEAVIKDLIR…DSSDDWEIPD (80 aa)) form a disordered region. The region spanning 83–343 (ITVGQRIGSG…PQILASIELL (261 aa)) is the Protein kinase domain. ATP is bound by residues 89–97 (IGSGSFGTV) and lysine 109. Aspartate 202 acts as the Proton acceptor in catalysis.

The protein belongs to the protein kinase superfamily. TKL Ser/Thr protein kinase family. RAF subfamily.

It catalyses the reaction L-seryl-[protein] + ATP = O-phospho-L-seryl-[protein] + ADP + H(+). The catalysed reaction is L-threonyl-[protein] + ATP = O-phospho-L-threonyl-[protein] + ADP + H(+). The sequence is that of Serine/threonine-protein kinase-transforming protein Rmil (V-RMIL) from Avian rous-associated virus type 1.